We begin with the raw amino-acid sequence, 263 residues long: MSLSPAIFSIGPVSIHWYSLAYVLGIVFAYWHLHKLDEQKIFTKNFYDSLLTATIIGIILGGRLGFVLIYDPISYINNPIEILKTWKGGMSFHGGAIGVLCAVIISCRRYNIPIFYTLDLISCGVPIGLFLGRIGNFVNGELFGRVTTMPWGMVFPESGDNLLRHPSQLYEAFFEGLLFFAIANSLFFLTRIRLYHGTLTGIAVIWYGTVRFVVEFFREPDYQVGYLWLDLTMGQLLSIFMTLLGIIVYLSALNSKFNTKSVA.

Transmembrane regions (helical) follow at residues 7–27 (IFSI…LGIV), 50–70 (LLTA…VLIY), 85–105 (TWKG…AVII), and 112–132 (IPIF…LFLG). Position 133 (Arg-133) interacts with a 1,2-diacyl-sn-glycero-3-phospho-(1'-sn-glycerol). 3 helical membrane-spanning segments follow: residues 169 to 189 (LYEA…LFFL), 197 to 217 (GTLT…VEFF), and 233 to 253 (MGQL…LSAL).

It belongs to the Lgt family.

The protein localises to the cell membrane. It carries out the reaction L-cysteinyl-[prolipoprotein] + a 1,2-diacyl-sn-glycero-3-phospho-(1'-sn-glycerol) = an S-1,2-diacyl-sn-glyceryl-L-cysteinyl-[prolipoprotein] + sn-glycerol 1-phosphate + H(+). It participates in protein modification; lipoprotein biosynthesis (diacylglyceryl transfer). Catalyzes the transfer of the diacylglyceryl group from phosphatidylglycerol to the sulfhydryl group of the N-terminal cysteine of a prolipoprotein, the first step in the formation of mature lipoproteins. This chain is Phosphatidylglycerol--prolipoprotein diacylglyceryl transferase, found in Wolbachia sp. subsp. Brugia malayi (strain TRS).